We begin with the raw amino-acid sequence, 372 residues long: MAKRDYYEVLGLSKGASKEEIKRAYKKLSKKYHPDINKEADAEDKFKEIAEAYEVLSDDQKKAQYDQFGHAGMGQGAGFGGQDFGGFGGFEDIFSSFFGGGARRDPNAPRQGNDLQYQMNVTFEEAVFGAEKEISVKKEVECDTCDGSGAQPGTNIKTCSTCGGRGNVHVEQNTPFGRVRSERTCPDCGGTGKEFEEKCSDCGGTGRKVKTVKISVKVPAGVDTGQQIRLSGQGEPGINGGPAGDLYVVFNVQDHAYFDRSGEDIFYTLELSIAQAALGDEVEVPTLEGKVKLTIPAGTQTGKRFRLKEKGVQNVHGYGRGDEYVTVKVMTPVKMTNRQAELLREFAEIDGHDITEQPSNFFDKTKRFFKGE.

Positions 5 to 69 (DYYEVLGLSK…QKKAQYDQFG (65 aa)) constitute a J domain. Residues 129–211 (GAEKEISVKK…CGGTGRKVKT (83 aa)) form a CR-type zinc finger. The Zn(2+) site is built by Cys142, Cys145, Cys159, Cys162, Cys185, Cys188, Cys199, and Cys202. CXXCXGXG motif repeat units lie at residues 142 to 149 (CDTCDGSG), 159 to 166 (CSTCGGRG), 185 to 192 (CPDCGGTG), and 199 to 206 (CSDCGGTG).

This sequence belongs to the DnaJ family. Homodimer. The cofactor is Zn(2+).

The protein resides in the cytoplasm. Its function is as follows. Participates actively in the response to hyperosmotic and heat shock by preventing the aggregation of stress-denatured proteins and by disaggregating proteins, also in an autonomous, DnaK-independent fashion. Unfolded proteins bind initially to DnaJ; upon interaction with the DnaJ-bound protein, DnaK hydrolyzes its bound ATP, resulting in the formation of a stable complex. GrpE releases ADP from DnaK; ATP binding to DnaK triggers the release of the substrate protein, thus completing the reaction cycle. Several rounds of ATP-dependent interactions between DnaJ, DnaK and GrpE are required for fully efficient folding. Also involved, together with DnaK and GrpE, in the DNA replication of plasmids through activation of initiation proteins. The sequence is that of Chaperone protein DnaJ from Macrococcus caseolyticus (strain JCSC5402) (Macrococcoides caseolyticum).